Consider the following 268-residue polypeptide: MSRLQTRFAQLKQENRAALVTFVTAGDPDYASSLEILKGLPAAGADVIELGMPFTDPMADGPAIQLANIRALDGGQTLARTLQMVREFRSGDSETPLVLMGYFNPIHHYGVERFIAEAKEVGVDGLIVVDLPPEHNEDLCHPAQAAGIDFIRLTTPTTGDQRLPTVLEGSSGFVYYVSVAGVTGANAATLEHVEEAVARLRRHTDLPIGIGFGIRSAEHAAAVARLADGVVVGSALIDRIAKARDNAQAVKDVLALCGELAEGVRNAR.

Residues Glu49 and Asp60 each act as proton acceptor in the active site.

Belongs to the TrpA family. Tetramer of two alpha and two beta chains.

The enzyme catalyses (1S,2R)-1-C-(indol-3-yl)glycerol 3-phosphate + L-serine = D-glyceraldehyde 3-phosphate + L-tryptophan + H2O. Its pathway is amino-acid biosynthesis; L-tryptophan biosynthesis; L-tryptophan from chorismate: step 5/5. The alpha subunit is responsible for the aldol cleavage of indoleglycerol phosphate to indole and glyceraldehyde 3-phosphate. The sequence is that of Tryptophan synthase alpha chain from Pseudomonas aeruginosa (strain ATCC 15692 / DSM 22644 / CIP 104116 / JCM 14847 / LMG 12228 / 1C / PRS 101 / PAO1).